The sequence spans 390 residues: MECPFQIKVCVSDRFFAFPYNLVEPQTAVGNRPTENLVVYVPTDADVLYVEKRNFPRFRSVLVYKHEQDYNGNSQSPKKTGAATIVYWNPLVPITEIGAGETRVFSVLLTNNLFYCNTLIVHHENPTCPIEFTYPGLEMQPVCKLLSGARKSVDMRAHAPPLSYSELRPINCELPLAHFKELTESDKFLLCFNLETPTMVKILCLKRIFCIFQYRKLPARYVINLPHEEVDSLYNKLNWARTRRLLRGDIPSNCATVNRASLQYVKDAQTLLHIAKCSQTIVEFVRIFQQLIFPYQIVPIVIVKLNSLNAKSGQTAHENRVRVFCKNDSVAITTAGCVPVNMPDAAPASTFDNTEFDDVAHLKQVANRVAVDGVFTSGVVVHAVRYNYFL.

This is an uncharacterized protein from Orgyia pseudotsugata multicapsid polyhedrosis virus (OpMNPV).